Here is a 154-residue protein sequence, read N- to C-terminus: MVEKKTSVRSQDPGQRRVLDRAARQRRINRQLEALENDNFQDDPHAGLPQLGKRLPQFDDDADTGKKKKKTRGDHFKLRFRKNFQALLEEQNLSVAEGPNYLTACAGPPSRPQRPFCAVCGFPSPYTCVSCGARYCTVRCLGTHQETRCLKWTV.

Residues 1-72 (MVEKKTSVRS…DTGKKKKKTR (72 aa)) form a disordered region. Residues 14–23 (GQRRVLDRAA) show a composition bias toward basic and acidic residues. Positions 23–39 (ARQRRINRQLEALENDN) form a coiled coil. The Nuclear localization signal signature appears at 38 to 47 (DNFQDDPHAG). Residues 72–110 (RGDHFKLRFRKNFQALLEEQNLSVAEGPNYLTACAGPPS) are interaction with NR1D2. Residue Thr-103 is modified to Phosphothreonine; by MAPK11 and MAPK14. Positions 117, 120, 128, 131, 136, 140, 144, and 149 each coordinate Zn(2+). The segment at 117-149 (CAVCGFPSPYTCVSCGARYCTVRCLGTHQETRC) adopts an HIT-type zinc-finger fold.

It belongs to the ZNHIT1 family. In terms of assembly, component of the chromatin-remodeling SRCAP complex composed of at least SRCAP, DMAP1, RUVBL1, RUVBL2, ACTL6A, YEATS4, ACTR6 and ZNHIT1. Interacts with MAPK11 and MAPK14. Interacts with NR1D1 and NR2D2. Interacts (via HIT-type zinc finger) with the RUVBL1/RUVBL2 complex in the presence of ADP. Interacts with histone deacetylase HDAC1. Interacts with histone H2AZ1; the interaction results in recruitment of H2AZ1 to the MYOG promoter region. Interacts with PCID2; the interaction results in inhibition of SRCAP complex activity, preventing the deposition of histone variant H2Az1 to lymphoid fate regulator genes and restricting lymphoid lineage commitment. Phosphorylated on Thr by MAPK11 or MAPK14. Phosphorylation is required for MYOG induction, for deposition of histone H2AZ1 at the MYOG promoter and for SRCAP complex integrity.

The protein localises to the nucleus. In terms of biological role, plays a role in chromatin remodeling by promoting the incorporation of histone variant H2AZ1/H2A.Z into the genome to regulate gene expression. Promotes SRCAP complex-mediated deposition of histone variant H2AZ1 to lymphoid fate regulator genes, enhancing lymphoid lineage commitment. Recruited to the promoter of the transcriptional activator MYOG at the early stages of muscle differentiation where it mediates binding of histone H2AZ1 to chromatin and induces muscle-specific gene expression. Maintains hematopoietic stem cell (HSC) quiescence by determining the chromatin accessibility at distal enhancers of HSC quiescence genes such as PTEN, FSTL1 and KLF4, enhancing deposition of H2AZ1 to promote their sustained transcription and restricting PI3K-AKT signaling inhibition. Plays a role in intestinal stem cell maintenance by promoting H2AZ1 deposition at the transcription start sites of genes involved in intestinal stem cell fate determination including LGR5, TGFB1 and TGFBR2, thereby contributing to gene transcription. Promotes phosphorylation of the H2AZ1 chaperone VPS72/YL1 which enhances the interaction between HZAZ1 and VPS72. Regulates the entry of male germ cells into meiosis by controlling histone H2AZ1 deposition which facilitates the expression of meiotic genes such as MEIOSIN, leading to the initiation of meiosis. Required for postnatal heart function through its role in maintenance of cardiac Ca(2+) homeostasis by modulating the expression of Ca(2+)-regulating proteins CASQ1 and ATP2A2/SERCA2A via deposition of histone H2AZ1 at their promoters. During embryonic heart development, required for mitochondrial maturation and oxidative metabolism by functioning through H2AZ1 deposition to activate transcription of metabolic genes and is also required to maintain the stability of the respiratory complex. In neural cells, increases deposition of the H2AZ1 histone variant and promotes neurite growth. Plays a role in TP53/p53-mediated apoptosis induction by stimulating the transcriptional activation of several proapoptotic p53 target genes such as PMAIP1/NOXA and BBC3/PUMA. Mediates cell cycle arrest induced in response to gamma-irradiation by enhancing recruitment of TP53/p53 to the promoter of the cell cycle inhibitor CDKN1A, leading to its transcriptional activation. Recruited to the promoter of cyclin-dependent kinase CDK6 and inhibits its transcription, possibly by decreasing the acetylation level of histone H4, leading to cell cycle arrest at the G1 phase. Plays a role in lens fiber cell differentiation by regulating the expression of cell cycle regulator CDKN1A/p21Cip1. Binds to transcriptional repressor NR1D2 and relieves it of its inhibitory effect on the transcription of apolipoprotein APOC3 without affecting its DNA-binding activity. The chain is Zinc finger HIT domain-containing protein 1 (ZNHIT1) from Bos taurus (Bovine).